We begin with the raw amino-acid sequence, 288 residues long: Probable ketoamine kinase VC_1539 (288 aa).

92–94 (NYL) is a binding site for ATP. The active-site Proton acceptor is the D195.

Belongs to the fructosamine kinase family.

Ketoamine kinase that phosphorylates ketoamines on the third carbon of the sugar moiety to generate ketoamine 3-phosphate. In Vibrio cholerae serotype O1 (strain ATCC 39315 / El Tor Inaba N16961), this protein is Probable ketoamine kinase VC_1539.